Consider the following 601-residue polypeptide: Probable serine/threonine-protein kinase WNK3 (601 aa).

Positions 34–291 (GRFNEILGKG…ARELLDDPFL (258 aa)) constitute a Protein kinase domain. ATP contacts are provided by residues 114–117 (TELF) and Lys-164. Asp-181 (proton acceptor) is an active-site residue. 2 disordered regions span residues 470 to 498 (GWRP…PGGA) and 551 to 601 (ADDD…SEQP). Over residues 477 to 493 (TDDDDDDDLVGGGDDPD) the composition is skewed to acidic residues. The span at 560–571 (LQGSSSDTGGSN) shows a compositional bias: polar residues. Residues 572–583 (HEQHAMGKDKEV) are compositionally biased toward basic and acidic residues.

Belongs to the protein kinase superfamily. Ser/Thr protein kinase family. WNK subfamily.

The catalysed reaction is L-seryl-[protein] + ATP = O-phospho-L-seryl-[protein] + ADP + H(+). It carries out the reaction L-threonyl-[protein] + ATP = O-phospho-L-threonyl-[protein] + ADP + H(+). The sequence is that of Probable serine/threonine-protein kinase WNK3 (WNK3) from Oryza sativa subsp. japonica (Rice).